The sequence spans 525 residues: GMP synthase [glutamine-hydrolyzing] (525 aa).

The Glutamine amidotransferase type-1 domain maps to 9–207; that stretch reads RILILDFGSQ…VRDICQCEAL (199 aa). Cys-86 acts as the Nucleophile in catalysis. Catalysis depends on residues His-181 and Glu-183. Residues 208-400 enclose the GMPS ATP-PPase domain; it reads WTPAKIIDDA…LGLPYDMLYR (193 aa). ATP is bound at residue 235-241; it reads SGGVDSS.

Homodimer.

It carries out the reaction XMP + L-glutamine + ATP + H2O = GMP + L-glutamate + AMP + diphosphate + 2 H(+). It participates in purine metabolism; GMP biosynthesis; GMP from XMP (L-Gln route): step 1/1. Functionally, catalyzes the synthesis of GMP from XMP. The protein is GMP synthase [glutamine-hydrolyzing] of Shigella sonnei (strain Ss046).